Reading from the N-terminus, the 686-residue chain is MTDALLPAAPQPLEKESDGYFRKGCNPLAQTGRSKLQNQRAALNQQILKAVRMRTGAENLLKVATNHKVREQVRLELSFVNSDLQMLKEELEGLNISVGVYQSTEEAFTVPLIPLGLKETKDIDFSVVLKDFILEHYSEDSYLYEDEIADLMDLRQACRTPSRDEAGVELLMSYFIQLGFVESRFFPPTRQMGILFTWYDSLTGVPVSQQNLLLEKASILFNIGALYTQIGTRCNRRTQAGLDGAVDAFQRAAGVLHHLKETFTHTPSYDMSPAMLSVLVKMMLAQAQENVFEKICLPGIRNEFFVLVKVAQEAAKVGEVYRQLHTAMSQAPVKENIPYSWASLVCVKAHHYAALAHYFAATLLIDHQLKPGADEDHQEKCLSQLYDHMPEGLTPLATLKSGHQRRQLGKSHLRRAVAHHEESVREASLCKKLRNIEVLQDVLSVAHERSRLKYAQHQDDDDLLNLIDAPDIISKTEQEVEIILPQFSKVTATDFFQKLGPLSVFSANKRWTPPRSIHFTAEEGDLGFTLRGNSPVQVHFLDPHCSAALAGAKEGDYIVSIQDVDCKWLTVSEVMKLLKACGRDGVEMKVVSLLDFTSSMHNKCATYSVGMQKTYSMICLAIDDDDKTDKTKKISKKLSFLSWGTDKNRVKSASTLCLPSVGVARPQVKKKLPSPFSLLNSDSSLY.

One can recognise an REM-1 domain in the interval 26–100 (NPLAQTGRSK…LEGLNISVGV (75 aa)). Residues 46-66 (QILKAVRMRTGAENLLKVATN) are interaction with Rho. Residues 111-460 (PLIPLGLKET…RLKYAQHQDD (350 aa)) form the BRO1 domain. Positions 515-593 (RSIHFTAEEG…DGVEMKVVSL (79 aa)) constitute a PDZ domain. T655 is modified (phosphothreonine).

Belongs to the RHPN family. As to quaternary structure, interacts with GTP-bound RhoA and RhoB. Interacts with both GTP- and GDP-bound RhoA. Interacts with KRT18. In terms of tissue distribution, mainly expressed in thyroid.

The protein localises to the cytoplasm. It localises to the perinuclear region. Functionally, binds specifically to GTP-Rho. May function in a Rho pathway to limit stress fiber formation and/or increase the turnover of F-actin structures in the absence of high levels of RhoA activity. This is Rhophilin-2 (RHPN2) from Canis lupus familiaris (Dog).